A 353-amino-acid chain; its full sequence is Photosystem II D2 protein (353 aa).

Threonine 2 is modified (N-acetylthreonine). Threonine 2 is modified (phosphothreonine). Residues 41-61 (CAYFALGGWFTGTTFVTSWYT) form a helical membrane-spanning segment. Residue histidine 118 participates in chlorophyll a binding. A helical membrane pass occupies residues 125-141 (GFMLRQFELSRSVQLRP). Positions 130 and 143 each coordinate pheophytin a. The helical transmembrane segment at 153–166 (VFVSVFLIYPLGQS) threads the bilayer. Histidine 198 lines the chlorophyll a pocket. Residues 208–228 (AALLCAIHGATVENTLFEDGD) form a helical membrane-spanning segment. Residues histidine 215 and phenylalanine 262 each contribute to the a plastoquinone site. Position 215 (histidine 215) interacts with Fe cation. Fe cation is bound at residue histidine 269. Residues 279 to 295 (GLWMSALGVVGLALNLR) traverse the membrane as a helical segment.

This sequence belongs to the reaction center PufL/M/PsbA/D family. As to quaternary structure, PSII is composed of 1 copy each of membrane proteins PsbA, PsbB, PsbC, PsbD, PsbE, PsbF, PsbH, PsbI, PsbJ, PsbK, PsbL, PsbM, PsbT, PsbX, PsbY, PsbZ, Psb30/Ycf12, at least 3 peripheral proteins of the oxygen-evolving complex and a large number of cofactors. It forms dimeric complexes. The D1/D2 heterodimer binds P680, chlorophylls that are the primary electron donor of PSII, and subsequent electron acceptors. It shares a non-heme iron and each subunit binds pheophytin, quinone, additional chlorophylls, carotenoids and lipids. There is also a Cl(-1) ion associated with D1 and D2, which is required for oxygen evolution. The PSII complex binds additional chlorophylls, carotenoids and specific lipids. is required as a cofactor.

The protein localises to the plastid. It is found in the chloroplast thylakoid membrane. It carries out the reaction 2 a plastoquinone + 4 hnu + 2 H2O = 2 a plastoquinol + O2. In terms of biological role, photosystem II (PSII) is a light-driven water:plastoquinone oxidoreductase that uses light energy to abstract electrons from H(2)O, generating O(2) and a proton gradient subsequently used for ATP formation. It consists of a core antenna complex that captures photons, and an electron transfer chain that converts photonic excitation into a charge separation. The D1/D2 (PsbA/PsbD) reaction center heterodimer binds P680, the primary electron donor of PSII as well as several subsequent electron acceptors. D2 is needed for assembly of a stable PSII complex. In Arabis hirsuta (Hairy rock-cress), this protein is Photosystem II D2 protein.